Consider the following 530-residue polypeptide: TNF receptor-associated factor 6 (530 aa).

Positions Met1–Ile362 are interaction with TAX1BP1. The RING-type zinc-finger motif lies at Cys70–Asn109. Lys124 is covalently cross-linked (Glycyl lysine isopeptide (Lys-Gly) (interchain with G-Cter in SUMO); alternate). Lys124 is covalently cross-linked (Glycyl lysine isopeptide (Lys-Gly) (interchain with G-Cter in ubiquitin); alternate). Lys142 is covalently cross-linked (Glycyl lysine isopeptide (Lys-Gly) (interchain with G-Cter in SUMO)). 2 TRAF-type zinc fingers span residues Asp150–Glu202 and Ile203–Ala259. A coiled-coil region spans residues Glu299–Gln356. Residue Lys327 forms a Glycyl lysine isopeptide (Lys-Gly) (interchain with G-Cter in ubiquitin) linkage. The 150-residue stretch at Asn358–Val507 folds into the MATH domain. Positions Trp363–Val530 are interaction with TANK. A Glycyl lysine isopeptide (Lys-Gly) (interchain with G-Cter in SUMO) cross-link involves residue Lys461.

It belongs to the TNF receptor-associated factor family. A subfamily. In terms of assembly, homotrimer. Homooligomer. N-terminal region is dimeric while C-terminal region is trimeric; maybe providing a mode of oligomerization. Upon IL1B treatment, forms a complex with PELI1, IRAK1, IRAK4 and MYD88; this complex recruits MAP3K7/TAK1, TAB1 and TAB2 to mediate NF-kappa-B activation. Direct binding of SMAD6 to PELI1 prevents the complex formation and hence negatively regulates IL1R-TLR signaling and eventually NF-kappa-B-mediated gene expression. Binds to TNFRSF5/CD40 and TNFRSF11A/RANK. Associates with NGFR, TNFRSF17, IRAK2, IRAK3, PELI2, PELI3, RIPK2, MAP3K1, MAP3K5, MAP3K14, CSK, TRAF, TRAF-interacting protein TRIP and TNF receptor associated protein TDP2. Binds UBE2V1. Interacts with MAVS/IPS1. Interacts with TAX1BP1; this interaction mediates deubiquitination of TRAF6 and inhibition of NF-kappa-B activation. Interacts with IL17R. Interacts with SQSTM1 bridging NTRK1 and NGFR. Forms a ternary complex with SQSTM1 and PRKCZ. Interacts with IL1RL1. Interacts with AJUBA. Interacts with TRAFD1. Interacts with TICAM2. Interacts with ZFAND5. Interacts with ARRB1 and ARRB2. Interacts with MAP3K7 and TAB1/MAP3K7IP1; during IL-1 signaling. Interacts with UBE2N. Interacts with TGFBR1, HDAC1 and RANGAP1. Interacts with AKT1, AKT2 and AKT3. Interacts (via TRAF domains) with NUMBL (via C-terminal). Interacts (via TRAF domains) with DYNC2I2 (via WD domains). Interacts with RBCK1. Interacts with LIMD1 (via LIM domains). Interacts with RSAD2/viperin. Interacts with IFIT3 (via N-terminus). Interacts (via C-terminus) with EIF2AK2/PKR (via the kinase catalytic domain). Interacts with CARD14. Interacts with CD40 and MAP3K8; the interaction is required for ERK activation. Interacts with TICAM1 and this interaction is enhanced in the presence of WDFY1. Interacts with TANK; this interaction increases in response to DNA damage. Interacts with USP10; this interaction increases in response to DNA damage. Interacts with ZC3H12A; this interaction increases in response to DNA damage and is stimulated by TANK. Interacts with WDFY3. Interacts with TRIM13. Interacts with GPS2. Interacts (via C-terminus) with SASH1. Interacts with LRRC19. Interacts with IL17RA and TRAF3IP2. Interacts with TOMM70. Interacts with AMBRA1; interaction is required to mediate 'Lys-63'-linked ubiquitination of ULK1. Interacts with CRBN; this interaction inhibits TLR4-mediated signaling by preventing TRAF6-mediated ubiquitination of ECSIT. (Microbial infection) Interacts (via N-terminal RING domain) with Toxoplasma gondii GRA7; the interaction plays a role in GRA7-induced pro-inflammatory cytokine production in mouse macrophages. Sumoylated on Lys-124, Lys-142 and Lys-461 with SUMO1. Post-translationally, polyubiquitinated on Lys-124 by TRAF3IP2; after cell stimulation with IL17A. Polyubiquitinated; after cell stimulation with IL1B or TGFB. This ligand-induced cell stimulation leads to dimerization/oligomerization of TRAF6 molecules, followed by auto-ubiquitination which involves UBE2N and UBE2V1 and leads to TRAF6 activation. This 'Lys-63' site-specific poly-ubiquitination appears to be associated with the activation of signaling molecules. Endogenous autoubiquitination occurs only for the cytoplasmic form. Deubiquitinated by USP10 in a TANK-dependent manner, leading to the negative regulation of NF-kappa-B signaling upon DNA damage. LRRC19 induces 'Lys-63' ubiquitination. Ubiquitinated at Lys-327 by the SCF(FBXL2) complex, leading to its degradation by the proteasome. In terms of tissue distribution, highly expressed in brain, lung, liver, skeletal muscle, and kidney; lower expression in heart, spleen, and testis.

Its subcellular location is the cytoplasm. It localises to the cell cortex. The protein resides in the nucleus. The protein localises to the lipid droplet. The enzyme catalyses S-ubiquitinyl-[E2 ubiquitin-conjugating enzyme]-L-cysteine + [acceptor protein]-L-lysine = [E2 ubiquitin-conjugating enzyme]-L-cysteine + N(6)-ubiquitinyl-[acceptor protein]-L-lysine.. The protein operates within protein modification; protein ubiquitination. Functionally, E3 ubiquitin ligase that, together with UBE2N and UBE2V1, mediates the synthesis of 'Lys-63'-linked-polyubiquitin chains conjugated to proteins, such as ECSIT, IKBKG, IRAK1, AKT1 and AKT2. Also mediates ubiquitination of free/unanchored polyubiquitin chain that leads to MAP3K7 activation. Leads to the activation of NF-kappa-B and JUN. Seems to also play a role in dendritic cells (DCs) maturation and/or activation. Represses c-Myb-mediated transactivation, in B-lymphocytes. Adapter protein that seems to play a role in signal transduction initiated via TNF receptor, IL-1 receptor and IL-17 receptor. Regulates osteoclast differentiation by mediating the activation of adapter protein complex 1 (AP-1) and NF-kappa-B, in response to RANK-L stimulation. Together with MAP3K8, mediates CD40 signals that activate ERK in B-cells and macrophages, and thus may play a role in the regulation of immunoglobulin production. Acts as a regulator of the JNK and NF-kappa-B signaling pathways by initiating assembly of heterotypic 'Lys-63'-/'Lys-48'-linked branched ubiquitin chains that are then recognized by TAB2: TRAF6 catalyzes initial 'Lys-63'-linked-polyubiquitin chains that are then branched via 'Lys-48'-linked polyubiquitin by HUWE1. 'Lys-63'-/'Lys-48'-linked branched ubiquitin chains protect 'Lys-63'-linkages from CYLD deubiquitination. Also participates in the TCR signaling by ubiquitinating LAT. The protein is TNF receptor-associated factor 6 (Traf6) of Mus musculus (Mouse).